We begin with the raw amino-acid sequence, 94 residues long: uncharacterized protein (94 aa).

This is an uncharacterized protein from Homo sapiens (Human).